Here is a 251-residue protein sequence, read N- to C-terminus: Triosephosphate isomerase (251 aa).

9-11 (NWK) contacts substrate. Residue H95 is the Electrophile of the active site. Catalysis depends on E167, which acts as the Proton acceptor. Substrate is bound by residues G173, S212, and 233-234 (GG).

The protein belongs to the triosephosphate isomerase family. Homodimer.

Its subcellular location is the cytoplasm. It catalyses the reaction D-glyceraldehyde 3-phosphate = dihydroxyacetone phosphate. It participates in carbohydrate biosynthesis; gluconeogenesis. Its pathway is carbohydrate degradation; glycolysis; D-glyceraldehyde 3-phosphate from glycerone phosphate: step 1/1. Its function is as follows. Involved in the gluconeogenesis. Catalyzes stereospecifically the conversion of dihydroxyacetone phosphate (DHAP) to D-glyceraldehyde-3-phosphate (G3P). This is Triosephosphate isomerase from Pseudomonas fluorescens (strain Pf0-1).